The following is a 159-amino-acid chain: Large ribosomal subunit protein uL23m (159 aa).

This sequence belongs to the universal ribosomal protein uL23 family. Component of the mitochondrial ribosome large subunit (39S) which comprises a 16S rRNA and about 50 distinct proteins.

It is found in the mitochondrion. The chain is Large ribosomal subunit protein uL23m (mrpl-23) from Caenorhabditis briggsae.